The sequence spans 317 residues: U5 small nuclear ribonucleoprotein TSSC4 (317 aa).

Residues 1 to 19 (MAETEAGLEVEEPTEDDTL) show a composition bias toward acidic residues. The interval 1 to 78 (MAETEAGLEV…IPTTAVQPFH (78 aa)) is disordered. Residues 20–37 (PSDTVSLSDSDSDLSLPS) show a composition bias toward low complexity. A phosphoserine mark is found at Ser-57, Ser-64, Ser-83, and Ser-92. The segment at 74-101 (VQPFHLRGMSSTFSQRSHSIFDCLESAA) is hom2; mediates interaction with the U5 snRNP complexes and required for spliceosomal tri-snRNP complex assembly. The segment at 123-151 (VAPPSQTPARSLSRVHGNTDPTRVHPVPD) is disordered. Positions 146–300 (VHPVPDYVSH…SKKRSRDHFR (155 aa)) are interaction with SNRNP200. The interval 147–183 (HPVPDYVSHPERWTKYSLEDVSETSEQSNRDAALAFL) is hom3; mediates interaction with the U5 snRNP complexes. Residues 198-238 (FNQDPSSCGEGRVVFTKPVRGSEARAERKRVLKKGVVSGAG) are hom4; necessary for interaction with the PRPF19 complex and required for spliceosomal tri-snRNP complex assembly. Position 214 is an N6-acetyllysine (Lys-214). The tract at residues 247 to 317 (HLAGPEAEEW…GPGSERGPSV (71 aa)) is disordered.

This sequence belongs to the TSSC4 family. In terms of assembly, interacts in a RNA-independent manner with distinct U5 snRNP-containing complexes, the mono-U5 snRNP and the post-splicing U5 snRNP-PRPF19 complex. Interacts with SNRNP200; the interaction is direct, excludes recruitment of C9ORF78 and WBP4 to SNRNP200 and negatively regulates its RNA helicase activity. Interacts with PRPF8; the interaction is direct.

Its subcellular location is the nucleus. The protein resides in the cytoplasm. Functionally, protein associated with the U5 snRNP, during its maturation and its post-splicing recycling and which is required for spliceosomal tri-snRNP complex assembly in the nucleus. Has a molecular sequestering activity and transiently hinders SNRNP200 binding sites for constitutive splicing factors that intervene later during the assembly of the spliceosome and splicing. Together with its molecular sequestering activity, may also function as a molecular adapter and placeholder, coordinating the assembly of the U5 snRNP and its association with the U4/U6 di-snRNP. This is U5 small nuclear ribonucleoprotein TSSC4 from Rattus norvegicus (Rat).